Consider the following 273-residue polypeptide: Transposable element Tc1 transposase (273 aa).

It belongs to the transposase 5 family.

The protein localises to the nucleus. In terms of biological role, probably essential for transposable element Tc1 transposition. The insertion of Tc1 is the main cause of spontaneous mutations. It is an endonuclease which can produce a single strand nick at the 5'-end of the transposon. This is Transposable element Tc1 transposase (tc1a) from Caenorhabditis elegans.